Reading from the N-terminus, the 266-residue chain is Undecaprenyl-diphosphatase (266 aa).

The next 8 helical transmembrane spans lie at 1–21, 39–59, 87–107, 114–134, 149–169, 183–203, 218–238, and 246–266; these read MDTF…FLPI, QGLS…VIYF, WWII…KDFI, AEVI…ADKM, ALLI…RSGA, AAAR…AILV, ALIL…HYFL, and MTPF…FIFF.

Belongs to the UppP family.

The protein resides in the cell inner membrane. The catalysed reaction is di-trans,octa-cis-undecaprenyl diphosphate + H2O = di-trans,octa-cis-undecaprenyl phosphate + phosphate + H(+). Functionally, catalyzes the dephosphorylation of undecaprenyl diphosphate (UPP). Confers resistance to bacitracin. The polypeptide is Undecaprenyl-diphosphatase (Shewanella baltica (strain OS223)).